The sequence spans 70 residues: Large ribosomal subunit protein uL29 (70 aa).

The protein belongs to the universal ribosomal protein uL29 family.

This is Large ribosomal subunit protein uL29 from Prochlorococcus marinus (strain MIT 9211).